The following is a 103-amino-acid chain: uncharacterized protein (103 aa).

The segment at 1 to 103 (MAGARRRARC…WRGGSCTSQR (103 aa)) is disordered. 2 stretches are compositionally biased toward basic residues: residues 55–65 (RRPGPGRRARS) and 74–84 (RPPHSRTRARR).

The protein belongs to the epstein-barr virus RPMS1 family.

This is an uncharacterized protein from Epstein-Barr virus (strain GD1) (HHV-4).